Here is a 398-residue protein sequence, read N- to C-terminus: Streptopain (398 aa).

A signal peptide spans 1–27; that stretch reads MNKKKLGVRLLSLLALGGFVLANPVFA. The propeptide occupies 28 to 145; that stretch reads DQNFARNEKE…TTYAGTAEIK (118 aa). Residue Cys-192 is the Nucleophile of the active site. Cysteine methyl disulfide; in zymogen form is present on Cys-192. A protein-binding residues include Ser-282 and Gly-339. Catalysis depends on His-340, which acts as the Proton acceptor. The segment at 368-390 is C-terminal active site loop; that stretch reads RLDALNPSALGTGGGAGGFNGYQ.

It belongs to the peptidase C10 family. Monomer. Post-translationally, the mature protease is derived from the precursor sequence by cleavage, either in cis via an autocatalytic mechanism, or in trans by mature SpeB or host proteases (trypsin, plasmin or subtilisin). Maturation can involve a number of protein cleavage intermediates. Mature SpeB probably plays the most important role in protein maturation in physiological conditions. Methylthiolation at Cys-192 of the inactive zymogen form is probably involved in the mechanism of secretion of the proteinase into the culture fluid.

Its subcellular location is the secreted. The protein resides in the host extracellular space. It is found in the host cytoplasm. The catalysed reaction is Preferential cleavage with hydrophobic residues at P2, P1 and P1'.. Synthesized as an inactive zymogen to protect the intracellular components of the bacteria from proteolytic activity during protein production. Once secreted into the extracellular milieu, cleaved into the active protease: maturation can be mediated in cis by autocatalytic cleavage, or in trans by mature SpeB or host proteases. Protease activity is strongly inhibited by zinc and copper, which prevent its maturation into an active protease: inhibition by metal ions may be required to prevent proteolysis of streptococcal proteins. Cysteine protease that acts as a key streptococcal virulence factor by cleaving host proteins involved in immune response. Triggers inflammation by mediating cleavage of host proteins, which can both promote host pathogenesis by triggering sterile inflammation and/or restrict streptococcal infection, depending on host immune statue and infection site. Cleaves host gasdermin-A (GSDMA) in epithelial cells, promoting GSDMA activation and formation of gasdermin pores, triggering pyroptosis. Pyroptosis triggers the elimination of the infected skin cell, depriving the pathogen of its protective niche, while inducing an inflammatory response. This ultimately prevents bacterial penetration of the epithelial barrier and a subsequent systemic dissemination of the pathogen. Also mediates cleavage of the cytokine precursor interleukin-1 beta (IL1B) to its mature form, resulting in inflammation and septic shock. SpeB-mediated maturation of IL1B plays a dual role depending on infection site: while IL1B inflammatory response prevents bacterial growth during invasive skin infections, it promotes streptococcal infection of the nasopharynx by disrupting colonization resistance mediated by the microbiota. Inhibits host autophagy be catalyzing cleavage and inactivation of key autophagy factors, such as CALCOCO2, NBR1 and SQSTM1. Cleaves and inhibits a number of complement factors, such as C2, C3-beta chain of C3, C4, C5 or SERPING1, thereby promoting evasion of host immunity. May also impair adaptive immunity by catalyzing cleavage and degradation of host immunoglobulins to promote immune system evasion; the relevance of this activity is however unsure in vivo. Catalyzes maturation and release of the peptide hormone bradykinin from the precursor Kininogen-1 (KNG1) to produce hypotension during septic shock. Also involved in bacterial translocation across the host epithelial barrier by mediating cleavage and degradation of host epithelial junction proteins, such as CDH1 and OCLN. Additionally, has been involved in degradation of fibronectin and vitronectin, two host extracellular matrix proteins involved in tissue integrity. Also able to catalyze cleavage and degradation of streptococcal proteins, such as C5a peptidase, EndoS or SmeZ. Degradation of streptococcal proteins is however strictly regulated to preserve integrity of other virulence factors. This is Streptopain from Streptococcus pyogenes serotype M1.